Reading from the N-terminus, the 102-residue chain is Small ribosomal subunit protein uS10 (102 aa).

The protein belongs to the universal ribosomal protein uS10 family. Part of the 30S ribosomal subunit.

Involved in the binding of tRNA to the ribosomes. The protein is Small ribosomal subunit protein uS10 of Mycoplasma capricolum subsp. capricolum (strain California kid / ATCC 27343 / NCTC 10154).